The primary structure comprises 150 residues: MVRRRPATGAAQRPQLAAVGRGLLLASVLAAAASSLPVAESSCPRDNSLVRDISRMQQSNYGREGFSHITVTGALAHGTKEVEVWLQTFGPGQRTPIHRHSCEEVFIVLKGKGTLLLGSSSLKYPGQPQEVPVFQNTTFSIPVNDPHQVW.

The N-terminal stretch at 1–41 (MVRRRPATGAAQRPQLAAVGRGLLLASVLAAAASSLPVAES) is a signal peptide. Zn(2+) is bound by residues histidine 98, histidine 100, and glutamate 104. An N-linked (GlcNAc...) asparagine glycan is attached at asparagine 136. Zn(2+) is bound at residue histidine 147.

In terms of assembly, homodimer.

Its subcellular location is the endoplasmic reticulum lumen. This is probably a receptor for the plant hormone auxin. The chain is Auxin-binding protein 5 (ABP5) from Zea mays (Maize).